Here is a 401-residue protein sequence, read N- to C-terminus: Probable trafficking protein particle complex subunit 13 homolog (401 aa).

Belongs to the TRAPPC13 family.

This chain is Probable trafficking protein particle complex subunit 13 homolog, found in Caenorhabditis briggsae.